A 154-amino-acid chain; its full sequence is Small ribosomal subunit protein uS7c (154 aa).

This sequence belongs to the universal ribosomal protein uS7 family. As to quaternary structure, part of the 30S ribosomal subunit.

It localises to the plastid. Its subcellular location is the chloroplast. In terms of biological role, one of the primary rRNA binding proteins, it binds directly to 16S rRNA where it nucleates assembly of the head domain of the 30S subunit. The protein is Small ribosomal subunit protein uS7c (rps7) of Pleurastrum terricola (Filamentous green alga).